The primary structure comprises 144 residues: Mediator of RNA polymerase II transcription subunit 21 (144 aa).

The protein belongs to the Mediator complex subunit 21 family. As to quaternary structure, interacts with PPARG. Component of the Mediator complex, which is composed of MED1, MED4, MED6, MED7, MED8, MED9, MED10, MED11, MED12, MED13, MED13L, MED14, MED15, MED16, MED17, MED18, MED19, MED20, MED21, MED22, MED23, MED24, MED25, MED26, MED27, MED29, MED30, MED31, CCNC, CDK8 and CDC2L6/CDK11. The MED12, MED13, CCNC and CDK8 subunits form a distinct module termed the CDK8 module. Mediator containing the CDK8 module is less active than Mediator lacking this module in supporting transcriptional activation. Individual preparations of the Mediator complex lacking one or more distinct subunits have been variously termed ARC, CRSP, DRIP, PC2, SMCC and TRAP. Interacts with THRA in a ligand-dependent fashion.

Its subcellular location is the nucleus. Component of the Mediator complex, a coactivator involved in the regulated transcription of nearly all RNA polymerase II-dependent genes. Mediator functions as a bridge to convey information from gene-specific regulatory proteins to the basal RNA polymerase II transcription machinery. Mediator is recruited to promoters by direct interactions with regulatory proteins and serves as a scaffold for the assembly of a functional preinitiation complex with RNA polymerase II and the general transcription factors. This Homo sapiens (Human) protein is Mediator of RNA polymerase II transcription subunit 21 (MED21).